The primary structure comprises 157 residues: Transcription elongation factor GreA (157 aa).

This sequence belongs to the GreA/GreB family.

Functionally, necessary for efficient RNA polymerase transcription elongation past template-encoded arresting sites. The arresting sites in DNA have the property of trapping a certain fraction of elongating RNA polymerases that pass through, resulting in locked ternary complexes. Cleavage of the nascent transcript by cleavage factors such as GreA or GreB allows the resumption of elongation from the new 3'terminus. GreA releases sequences of 2 to 3 nucleotides. This Mesorhizobium japonicum (strain LMG 29417 / CECT 9101 / MAFF 303099) (Mesorhizobium loti (strain MAFF 303099)) protein is Transcription elongation factor GreA.